The sequence spans 1154 residues: Large proline-rich protein BAG6 (1154 aa).

At Met1 the chain carries N-acetylmethionine. Residues Leu17–Thr92 form the Ubiquitin-like domain. 5 disordered regions span residues Arg87 to His125, Arg186 to Pro274, Thr387 to Pro442, Gln463 to Gly531, and Ala568 to Asp626. The residue at position 96 (Ser96) is a Phosphoserine. Residues Ser96–Ala112 are compositionally biased toward low complexity. A Phosphothreonine modification is found at Thr117. Polar residues predominate over residues Val209–Pro218. The stretch at Arg237–His271 is repeat 1. The interval Arg237–Met658 is 4 X 29 AA approximate repeats. Pro residues predominate over residues Gly249 to Ala263. The span at Gly400–Ala409 shows a compositional bias: low complexity. Positions Gln410 to Glu426 are enriched in polar residues. Repeat unit 2 spans residues Pro416–Val444. 2 stretches are compositionally biased toward pro residues: residues Ala428–Ser439 and Pro508–Pro521. Low complexity-rich tracts occupy residues Ala568–Pro581 and Pro591–Pro609. 2 tandem repeats follow at residues Ser597 to Ala624 and Ser630 to Met658. Pro residues predominate over residues Pro611–Pro622. Disordered regions lie at residues Gln673–Pro719 and Pro968–Pro1154. Over residues Ala678–Ser702 the composition is skewed to pro residues. Phosphoserine occurs at positions 986 and 995. Residues Ala1029 to Pro1042 show a composition bias toward low complexity. Positions Trp1032–Asp1062 are required for interaction with GET4. The Nuclear localization site motif lies at Ala1034 to Met1076. Residues Ile1044–Pro1154 are sufficient for the delivery of client proteins to the endoplasmic reticulum. Thr1075 is modified (phosphothreonine). A BAG-similar domain, required and sufficient for interaction with UBL4A region spans residues Gly1080–Asn1137. Positions Ala1088–Ala1098 are enriched in low complexity. Phosphoserine occurs at positions 1103 and 1139.

In terms of assembly, component of the BAG6/BAT3 complex, also named BAT3 complex, at least composed of BAG6, UBL4A and GET4/TRC35. Interacts with GET4; the interaction is direct and localizes BAG6 in the cytosol. Interacts with UBL4A; the interaction is direct and required for UBL4A protein stability. Interacts with AIFM1. Interacts with HSPA2. Interacts with CTCFL. Interacts with p300/EP300. Interacts (via ubiquitin-like domain) with RNF126; required for BAG6-dependent ubiquitination of proteins mislocalized to the cytosol. Interacts (via ubiquitin-like domain) with SGTA; SGTA competes with RNF126 by binding the same region of BAG6, thereby promoting deubiquitination of BAG6-target proteins and rescuing them from degradation. Interacts with ricin A chain. Interacts with VCP and AMFR; both form the VCP/p97-AMFR/gp78 complex. Interacts with SYVN1. Interacts with USP13; the interaction is direct and may mediate UBL4A deubiquitination. Interacts with ZFAND2B. Interacts with KPNA2. Interacts with UBQLN4. Post-translationally, ricin can induce a cleavage by the caspase CASP3. The released C-terminal peptide induces apoptosis.

It is found in the cytoplasm. Its subcellular location is the cytosol. The protein resides in the nucleus. It localises to the secreted. The protein localises to the extracellular exosome. Its function is as follows. ATP-independent molecular chaperone preventing the aggregation of misfolded and hydrophobic patches-containing proteins. Functions as part of a cytosolic protein quality control complex, the BAG6/BAT3 complex, which maintains these client proteins in a soluble state and participates in their proper delivery to the endoplasmic reticulum or alternatively can promote their sorting to the proteasome where they undergo degradation. The BAG6/BAT3 complex is involved in the post-translational delivery of tail-anchored/type II transmembrane proteins to the endoplasmic reticulum membrane. Recruited to ribosomes, it interacts with the transmembrane region of newly synthesized tail-anchored proteins and together with SGTA and ASNA1 mediates their delivery to the endoplasmic reticulum. Client proteins that cannot be properly delivered to the endoplasmic reticulum are ubiquitinated by RNF126, an E3 ubiquitin-protein ligase associated with BAG6 and are sorted to the proteasome. SGTA which prevents the recruitment of RNF126 to BAG6 may negatively regulate the ubiquitination and the proteasomal degradation of client proteins. Similarly, the BAG6/BAT3 complex also functions as a sorting platform for proteins of the secretory pathway that are mislocalized to the cytosol either delivering them to the proteasome for degradation or to the endoplasmic reticulum. The BAG6/BAT3 complex also plays a role in the endoplasmic reticulum-associated degradation (ERAD), a quality control mechanism that eliminates unwanted proteins of the endoplasmic reticulum through their retrotranslocation to the cytosol and their targeting to the proteasome. It maintains these retrotranslocated proteins in an unfolded yet soluble state condition in the cytosol to ensure their proper delivery to the proteasome. BAG6 is also required for selective ubiquitin-mediated degradation of defective nascent chain polypeptides by the proteasome. In this context, it may participate in the production of antigenic peptides and play a role in antigen presentation in immune response. BAG6 is also involved in endoplasmic reticulum stress-induced pre-emptive quality control, a mechanism that selectively attenuates the translocation of newly synthesized proteins into the endoplasmic reticulum and reroutes them to the cytosol for proteasomal degradation. BAG6 may ensure the proper degradation of these proteins and thereby protects the endoplasmic reticulum from protein overload upon stress. By inhibiting the polyubiquitination and subsequent proteasomal degradation of HSPA2 it may also play a role in the assembly of the synaptonemal complex during spermatogenesis. Also positively regulates apoptosis by interacting with and stabilizing the proapoptotic factor AIFM1. By controlling the steady-state expression of the IGF1R receptor, indirectly regulates the insulin-like growth factor receptor signaling pathway. In terms of biological role, involved in DNA damage-induced apoptosis: following DNA damage, accumulates in the nucleus and forms a complex with p300/EP300, enhancing p300/EP300-mediated p53/TP53 acetylation leading to increase p53/TP53 transcriptional activity. When nuclear, may also act as a component of some chromatin regulator complex that regulates histone 3 'Lys-4' dimethylation (H3K4me2). Released extracellularly via exosomes, it is a ligand of the natural killer/NK cells receptor NCR3 and stimulates NK cells cytotoxicity. It may thereby trigger NK cells cytotoxicity against neighboring tumor cells and immature myeloid dendritic cells (DC). Functionally, may mediate ricin-induced apoptosis. In Mus musculus (Mouse), this protein is Large proline-rich protein BAG6.